A 208-amino-acid polypeptide reads, in one-letter code: Pyridoxine/pyridoxamine 5'-phosphate oxidase (208 aa).

Residues 55–60, 70–71, lysine 77, and glutamine 99 contribute to the FMN site; these read RMVLLK and YT. Lysine 60 is a binding site for substrate. 3 residues coordinate substrate: tyrosine 117, arginine 121, and serine 125. FMN-binding positions include 134–135 and tryptophan 180; that span reads QS. Substrate is bound at residue 186 to 188; that stretch reads RIH. Residue arginine 190 coordinates FMN.

The protein belongs to the pyridoxamine 5'-phosphate oxidase family. Homodimer. FMN serves as cofactor.

It carries out the reaction pyridoxamine 5'-phosphate + O2 + H2O = pyridoxal 5'-phosphate + H2O2 + NH4(+). It catalyses the reaction pyridoxine 5'-phosphate + O2 = pyridoxal 5'-phosphate + H2O2. It functions in the pathway cofactor metabolism; pyridoxal 5'-phosphate salvage; pyridoxal 5'-phosphate from pyridoxamine 5'-phosphate: step 1/1. Its pathway is cofactor metabolism; pyridoxal 5'-phosphate salvage; pyridoxal 5'-phosphate from pyridoxine 5'-phosphate: step 1/1. Catalyzes the oxidation of either pyridoxine 5'-phosphate (PNP) or pyridoxamine 5'-phosphate (PMP) into pyridoxal 5'-phosphate (PLP). The protein is Pyridoxine/pyridoxamine 5'-phosphate oxidase of Pelagibacter ubique (strain HTCC1062).